Here is an 843-residue protein sequence, read N- to C-terminus: Protein P (843 aa).

A terminal protein domain (TP) region spans residues 1–177 (MPLSYQHFRK…FCGSPYSWEQ (177 aa)). The spacer stretch occupies residues 178–346 (ELQHGRLVFQ…YCLSHIVNLL (169 aa)). Disordered regions lie at residues 218 to 243 (LKQS…SGSI) and 290 to 316 (STSK…RSQS). A compositionally biased stretch (polar residues) spans 290 to 299 (STSKRQSSSG). The polymerase/reverse transcriptase domain (RT) stretch occupies residues 347–690 (EDWGPCTEHG…YLHLYPVARQ (344 aa)). The region spanning 357–600 (EHNIRIPRTP…YSLNFMGYVI (244 aa)) is the Reverse transcriptase domain. The Mg(2+) site is built by D429, D551, and D552.

Belongs to the hepadnaviridae P protein family.

The enzyme catalyses DNA(n) + a 2'-deoxyribonucleoside 5'-triphosphate = DNA(n+1) + diphosphate. The catalysed reaction is Endonucleolytic cleavage to 5'-phosphomonoester.. Activated by host HSP70 and HSP40 in vitro to be able to bind the epsilon loop of the pgRNA. Because deletion of the RNase H region renders the protein partly chaperone-independent, the chaperones may be needed indirectly to relieve occlusion of the RNA-binding site by this domain. Inhibited by several reverse-transcriptase inhibitors: Lamivudine, Adefovir and Entecavir. In terms of biological role, multifunctional enzyme that converts the viral RNA genome into dsDNA in viral cytoplasmic capsids. This enzyme displays a DNA polymerase activity that can copy either DNA or RNA templates, and a ribonuclease H (RNase H) activity that cleaves the RNA strand of RNA-DNA heteroduplexes in a partially processive 3'- to 5'-endonucleasic mode. Neo-synthesized pregenomic RNA (pgRNA) are encapsidated together with the P protein, and reverse-transcribed inside the nucleocapsid. Initiation of reverse-transcription occurs first by binding the epsilon loop on the pgRNA genome, and is initiated by protein priming, thereby the 5'-end of (-)DNA is covalently linked to P protein. Partial (+)DNA is synthesized from the (-)DNA template and generates the relaxed circular DNA (RC-DNA) genome. After budding and infection, the RC-DNA migrates in the nucleus, and is converted into a plasmid-like covalently closed circular DNA (cccDNA). The activity of P protein does not seem to be necessary for cccDNA generation, and is presumably released from (+)DNA by host nuclear DNA repair machinery. The chain is Protein P from Homo sapiens (Human).